Consider the following 1372-residue polypeptide: DNA-directed RNA polymerase subunit beta (1372 aa).

Belongs to the RNA polymerase beta chain family. The RNAP catalytic core consists of 2 alpha, 1 beta, 1 beta' and 1 omega subunit. When a sigma factor is associated with the core the holoenzyme is formed, which can initiate transcription.

It catalyses the reaction RNA(n) + a ribonucleoside 5'-triphosphate = RNA(n+1) + diphosphate. In terms of biological role, DNA-dependent RNA polymerase catalyzes the transcription of DNA into RNA using the four ribonucleoside triphosphates as substrates. The polypeptide is DNA-directed RNA polymerase subunit beta (Nitratidesulfovibrio vulgaris (strain ATCC 29579 / DSM 644 / CCUG 34227 / NCIMB 8303 / VKM B-1760 / Hildenborough) (Desulfovibrio vulgaris)).